An 84-amino-acid chain; its full sequence is Small ribosomal subunit protein bS20 (84 aa).

A disordered region spans residues 1-25 (MPVIKSAMKRVRTSEKAAARNRSQM).

The protein belongs to the bacterial ribosomal protein bS20 family.

Functionally, binds directly to 16S ribosomal RNA. This is Small ribosomal subunit protein bS20 from Pediococcus pentosaceus (strain ATCC 25745 / CCUG 21536 / LMG 10740 / 183-1w).